The sequence spans 1211 residues: A disintegrin and metalloproteinase with thrombospondin motifs 2 (1211 aa).

The N-terminal stretch at 1-29 is a signal peptide; that stretch reads MDPPAGAARRLLCPALLLLLLLLPPPLLP. The propeptide occupies 30-253; the sequence is PPPPPANARL…GVLEEHANSS (224 aa). N-linked (GlcNAc...) asparagine glycans are attached at residues Asn112 and Asn251. The 205-residue stretch at 266-470 folds into the Peptidase M12B domain; sequence YNIEVLLGVD…HSYDCLLDDP (205 aa). Disulfide bonds link Cys343–Cys392, Cys386–Cys465, Cys425–Cys451, Cys492–Cys517, Cys503–Cys526, Cys512–Cys545, Cys539–Cys550, Cys573–Cys610, Cys577–Cys615, and Cys588–Cys600. His408 provides a ligand contact to Zn(2+). Glu409 is an active-site residue. Residues His412 and His418 each contribute to the Zn(2+) site. In terms of domain architecture, Disintegrin spans 480–560; it reads QLPGLHYSMN…IWLTPDILKR (81 aa). A TSP type-1 1 domain is found at 561 to 616; the sequence is DGSWGAWSPFGSCSRTCGTGVKFRTRQCDNPHPANGGRTCSGLAYDFQLCSRQDCP. The Cell attachment site motif lies at 691 to 693; that stretch reads RGD. The interval 723–851 is spacer; that stretch reads KVVKGTFTRS…NVDDNNVLEE (129 aa). 3 consecutive TSP type-1 domains span residues 854-912, 914-971, and 975-1029; these read VVYE…NPQE, SQPV…RACS, and CPGR…GPCP. N-linked (GlcNAc...) asparagine glycosylation is found at Asn949 and Asn993. Disulfide bonds link Cys987–Cys1023, Cys991–Cys1028, and Cys1002–Cys1012. A glycan (N-linked (GlcNAc...) asparagine) is linked at Asn1031. One can recognise a PLAC domain in the interval 1059 to 1097; sequence SKGHCQGDKSIFCRMEVLSRYCSIPGYNKLCCKSCNLYN. Residues Asn1098, Asn1145, and Asn1150 are each glycosylated (N-linked (GlcNAc...) asparagine). Positions 1170-1191 are disordered; sequence LEDEVQPPNLIPRRPSPYEKTR.

In terms of assembly, may belong to a multimeric complex. Binds specifically to collagen type XIV. The cofactor is Zn(2+). In terms of processing, the precursor is cleaved by a furin endopeptidase. Glycosylated. Can be O-fucosylated by POFUT2 on a serine or a threonine residue found within the consensus sequence C1-X(2)-(S/T)-C2-G of the TSP type-1 repeat domains where C1 and C2 are the first and second cysteine residue of the repeat, respectively. Fucosylated repeats can then be further glycosylated by the addition of a beta-1,3-glucose residue by the glucosyltransferase, B3GALTL. Fucosylation mediates the efficient secretion of ADAMTS family members. Can also be C-glycosylated with one or two mannose molecules on tryptophan residues within the consensus sequence W-X-X-W of the TPRs, and N-glycosylated. These other glycosylations can also facilitate secretion. In terms of tissue distribution, expressed at high level in skin, bone, tendon and aorta and at low levels in thymus and brain.

It localises to the secreted. The protein resides in the extracellular space. The protein localises to the extracellular matrix. The enzyme catalyses Cleaves the N-propeptide of collagen chain alpha1(I) at Pro-|-Gln and of alpha1(II) and alpha2(I) at Ala-|-Gln.. Cleaves the propeptides of type I and II collagen prior to fibril assembly. Does not act on type III collagen. Cleaves lysyl oxidase LOX at a site downstream of its propeptide cleavage site to produce a short LOX form with reduced collagen-binding activity. The protein is A disintegrin and metalloproteinase with thrombospondin motifs 2 (ADAMTS2) of Homo sapiens (Human).